A 183-amino-acid chain; its full sequence is Outer membrane protein H.8 (183 aa).

The signal sequence occupies residues 1 to 17; the sequence is MKAYLALISAAVIGLAA. Cys18 carries the N-palmitoyl cysteine lipid modification. Cys18 carries S-diacylglycerol cysteine lipidation. The disordered stretch occupies residues 27 to 51; the sequence is AEATPAAEAPASEAPAAEAAPADAA. Residues 57 to 183 form the Plastocyanin-like domain; that stretch reads GNCAATVESN…LMNGKVTLVD (127 aa). Cu cation is bound by residues His102, Cys166, His171, and Met175.

Cu cation serves as cofactor.

The protein resides in the cell outer membrane. The protein is Outer membrane protein H.8 of Neisseria meningitidis serogroup C / serotype 2a (strain ATCC 700532 / DSM 15464 / FAM18).